We begin with the raw amino-acid sequence, 99 residues long: Small ribosomal subunit protein uS14m (99 aa).

The protein belongs to the universal ribosomal protein uS14 family.

The protein resides in the mitochondrion. This Marchantia polymorpha (Common liverwort) protein is Small ribosomal subunit protein uS14m (RPS14).